The primary structure comprises 446 residues: Transcription factor Dp-2 (446 aa).

T2 carries the post-translational modification N-acetylthreonine. Phosphoserine is present on S24. Residues 60 to 82 (PQMIISTPQRLTSSGSVLIGSPY) form an interaction with CEBPA region. The short motif at 103-118 (GDRKRARKFIDSDFSE) is the Nuclear localization signal element. The residue at position 122 (S122) is a Phosphoserine. A DNA-binding region spans residues 129-210 (GKGLRHFSMK…KKEIKWIGLP (82 aa)). The short motif at 176-210 (DQKNIRRRVYDALNVLMAMNIISKEKKEIKWIGLP) is the DEF box element. A dimerization region spans residues 219 to 292 (NLEIEKQRRI…RKTVIDCSIS (74 aa)). Positions 229 to 261 (ERIKQKRAQLQELLLQQIAFKNLVQRNRQNEQQ) are DCB1. The interval 274–330 (LPFIIINTSRKTVIDCSISSDKFEYLFNFDNTFEIHDDIEVLKRMGMSFGLESGKCS) is DCB2. A compositionally biased stretch (low complexity) spans 409–419 (SHQSSSAASHC). A disordered region spans residues 409–446 (SHQSSSAASHCSESRGETPCSFNDEDEEDDEEDSSSPE). Acidic residues predominate over residues 431 to 446 (NDEDEEDDEEDSSSPE).

This sequence belongs to the E2F/DP family. In terms of assembly, component of the DRTF1/E2F transcription factor complex. Forms heterodimers with E2F family members. The complex can interact with hypophosphorylated retinoblastoma protein RB1 and related proteins (RBL1 and RBL2) that inhibit the E2F transactivation domain. During the cell cycle, RB becomes phosphorylated in mid-to-late G1 phase, detaches from the DRTF1/E2F complex rendering E2F transcriptionally active. Viral oncoproteins, notably E1A, T-antigen and HPV E7, are capable of sequestering RB protein, thus releasing the active complex. Interacts with GMCL. Component of the DREAM complex (also named LINC complex) at least composed of E2F4, E2F5, LIN9, LIN37, LIN52, LIN54, MYBL1, MYBL2, RBL1, RBL2, RBBP4, TFDP1 and TFDP2. The complex exists in quiescent cells where it represses cell cycle-dependent genes. It dissociates in S phase when LIN9, LIN37, LIN52 and LIN54 form a subcomplex that binds to MYBL2. The complex TFDP2:E2F1 interacts with CEBPA; the interaction prevents CEBPA binding to target genes promoters and represses its transcriptional activity. Post-translationally, ser-24 is probably phosphorylated by CDK2. High levels in heart and skeletal muscle. Also found in placenta, kidney, brain, lung and liver. The presence as well as the abundance of the different transcripts appear to vary significantly in different tissues and cell lines.

The protein localises to the nucleus. Can stimulate E2F-dependent transcription. Binds DNA cooperatively with E2F family members through the E2 recognition site, 5'-TTTC[CG]CGC-3', found in the promoter region of a number of genes whose products are involved in cell cycle regulation or in DNA replication. The TFDP2:E2F complex functions in the control of cell-cycle progression from G1 to S phase. The E2F1:DP complex appears to mediate both cell proliferation and apoptosis. Blocks adipocyte differentiation by repressing CEBPA binding to its target gene promoters. This Homo sapiens (Human) protein is Transcription factor Dp-2 (TFDP2).